The chain runs to 802 residues: Post-transcriptional regulator mkt1 (802 aa).

Phosphoserine occurs at positions 227, 228, and 230.

It belongs to the XPG/RAD2 endonuclease family. In terms of assembly, interacts with pab1 binding protein ath1.

Functionally, involved in post-transcriptional regulation of gene expression by 3'-UTR-mediated RNA regulation. Promotes interactions between mRNA and poly(A)-binding protein. Binds the 3' UTR of mRNAs, centromeric transcripts and antisense-rDNA. Required for the establishment but not the maintenance of heterochromatin at pericentromeres, and for the maintenance of small domains of facultative heterochromatin known as HOODs. This Schizosaccharomyces pombe (strain 972 / ATCC 24843) (Fission yeast) protein is Post-transcriptional regulator mkt1.